The following is a 328-amino-acid chain: D-cysteine desulfhydrase (328 aa).

Lys51 carries the N6-(pyridoxal phosphate)lysine modification.

This sequence belongs to the ACC deaminase/D-cysteine desulfhydrase family. Homodimer. Pyridoxal 5'-phosphate is required as a cofactor.

It catalyses the reaction D-cysteine + H2O = hydrogen sulfide + pyruvate + NH4(+) + H(+). Functionally, catalyzes the alpha,beta-elimination reaction of D-cysteine and of several D-cysteine derivatives. It could be a defense mechanism against D-cysteine. This Shigella sonnei (strain Ss046) protein is D-cysteine desulfhydrase.